The primary structure comprises 703 residues: Glycine--tRNA ligase beta subunit (703 aa).

Belongs to the class-II aminoacyl-tRNA synthetase family. Tetramer of two alpha and two beta subunits.

The protein resides in the cytoplasm. It catalyses the reaction tRNA(Gly) + glycine + ATP = glycyl-tRNA(Gly) + AMP + diphosphate. The polypeptide is Glycine--tRNA ligase beta subunit (Myxococcus xanthus (strain DK1622)).